The sequence spans 260 residues: DNA repair protein RecO (260 aa).

This sequence belongs to the RecO family.

Functionally, involved in DNA repair and RecF pathway recombination. The chain is DNA repair protein RecO from Paracidovorax citrulli (strain AAC00-1) (Acidovorax citrulli).